The chain runs to 434 residues: Trigger factor (434 aa).

Positions 161–246 (EDRVTVDFTG…LKKVEQRELP (86 aa)) constitute a PPIase FKBP-type domain.

Belongs to the FKBP-type PPIase family. Tig subfamily.

Its subcellular location is the cytoplasm. The catalysed reaction is [protein]-peptidylproline (omega=180) = [protein]-peptidylproline (omega=0). Its function is as follows. Involved in protein export. Acts as a chaperone by maintaining the newly synthesized protein in an open conformation. Functions as a peptidyl-prolyl cis-trans isomerase. The polypeptide is Trigger factor (Sodalis glossinidius (strain morsitans)).